The sequence spans 371 residues: Carnitine monooxygenase oxygenase subunit (371 aa).

The region spanning 44–152 (WICVAHGSEL…VEEYAGFVFI (109 aa)) is the Rieske domain. [2Fe-2S] cluster contacts are provided by Cys86, His88, Cys106, and His109. Fe cation-binding residues include His208, His213, and Asp323.

This sequence belongs to the bacterial ring-hydroxylating dioxygenase alpha subunit family. CntA subfamily. In terms of assembly, composed of an oxygenase subunit and a reductase subunit. Requires [2Fe-2S] cluster as cofactor. It depends on Fe cation as a cofactor.

The catalysed reaction is (R)-carnitine + NADH + O2 + H(+) = (3R)-3-hydroxy-4-oxobutanoate + trimethylamine + NAD(+) + H2O. The enzyme catalyses (R)-carnitine + NADPH + O2 + H(+) = (3R)-3-hydroxy-4-oxobutanoate + trimethylamine + NADP(+) + H2O. It functions in the pathway amine and polyamine metabolism; carnitine metabolism. Inhibited by EDTA. Converts carnitine to trimethylamine and malic semialdehyde. Acts on both enantiomers. This Acinetobacter pittii (strain PHEA-2) protein is Carnitine monooxygenase oxygenase subunit.